Consider the following 175-residue polypeptide: Large ribosomal subunit protein uL10 (175 aa).

Belongs to the universal ribosomal protein uL10 family. As to quaternary structure, part of the ribosomal stalk of the 50S ribosomal subunit. The N-terminus interacts with L11 and the large rRNA to form the base of the stalk. The C-terminus forms an elongated spine to which L12 dimers bind in a sequential fashion forming a multimeric L10(L12)X complex.

Forms part of the ribosomal stalk, playing a central role in the interaction of the ribosome with GTP-bound translation factors. The protein is Large ribosomal subunit protein uL10 of Desulfotalea psychrophila (strain LSv54 / DSM 12343).